The following is a 503-amino-acid chain: DnaJ homolog subfamily C member 3 (503 aa).

The N-terminal stretch at 1-31 is a signal peptide; it reads MVSAAASAGRLGSALPFLLVLLDLQYQGAEC. TPR repeat units lie at residues 37 to 70, 71 to 104, 105 to 137, 153 to 186, 187 to 220, 221 to 254, 267 to 300, 305 to 338, and 339 to 372; these read VEKQ…DSDN, YIAY…KQDF, TSRL…NPSN, LQRL…CVWD, AELR…KSDN, TEAF…DQDH, LNKQ…EPDV, TRAK…EPTN, and VNAL…SEND. Cys-247 and Cys-257 are oxidised to a cystine. A disulfide bridge connects residues Cys-312 and Cys-328. The segment at 374 to 392 is flexible linker; the sequence is QIREGLERAQRMLKQSQKR. In terms of domain architecture, J spans 393-461; sequence DYYKILGVKR…EMRRKFDAGE (69 aa).

Its subcellular location is the endoplasmic reticulum. In terms of biological role, may be involved in the unfolded protein response (UPR) during ER stress. This Gallus gallus (Chicken) protein is DnaJ homolog subfamily C member 3 (DNAJC3).